A 929-amino-acid polypeptide reads, in one-letter code: Patatin-like phospholipase domain-containing protein CNE02340 (929 aa).

The interval 37 to 85 (QPLDGDSSPLSPRSFSLPPESPQLSTASVKAPPPTWKYGPDNGTLRSGR) is disordered. Positions 43 to 54 (SSPLSPRSFSLP) are enriched in low complexity. Residues 126–146 (WPLLFFIFFIIYLEFSAYVIT) form a helical membrane-spanning segment. The 193-residue stretch at 301 to 493 (LCLSGGASFG…REDIPLGSLH (193 aa)) folds into the PNPLA domain. Positions 332–336 (GTSAG) match the GXSXG motif. Ser-334 acts as the Nucleophile in catalysis. Asp-480 acts as the Proton acceptor in catalysis. Disordered regions lie at residues 644–765 (ALSH…NFGD), 778–806 (LSSP…QRFR), and 818–929 (VSES…QDGA). Composition is skewed to polar residues over residues 652–664 (NDPA…TNPE) and 745–764 (PTHS…SNFG). Positions 779–806 (SSPFRSIRSNTSSSSNNVQSPSSSQRFR) are enriched in low complexity. The span at 856–878 (VESHSDRSEDEMLHSGANVKEEY) shows a compositional bias: basic and acidic residues.

This sequence belongs to the PLPL family.

It localises to the membrane. In terms of biological role, probable lipid hydrolase. This Cryptococcus neoformans var. neoformans serotype D (strain JEC21 / ATCC MYA-565) (Filobasidiella neoformans) protein is Patatin-like phospholipase domain-containing protein CNE02340.